The sequence spans 535 residues: Peptide chain release factor 3 (535 aa).

One can recognise a tr-type G domain in the interval 8–276; it reads ARRRTFAIIS…ALVEQAPPPG (269 aa). GTP contacts are provided by residues 17–24, 85–89, and 139–142; these read SHPDAGKT, DTPGH, and NKMD.

It belongs to the TRAFAC class translation factor GTPase superfamily. Classic translation factor GTPase family. PrfC subfamily.

Its subcellular location is the cytoplasm. In terms of biological role, increases the formation of ribosomal termination complexes and stimulates activities of RF-1 and RF-2. It binds guanine nucleotides and has strong preference for UGA stop codons. It may interact directly with the ribosome. The stimulation of RF-1 and RF-2 is significantly reduced by GTP and GDP, but not by GMP. This chain is Peptide chain release factor 3, found in Bordetella petrii (strain ATCC BAA-461 / DSM 12804 / CCUG 43448).